Here is a 177-residue protein sequence, read N- to C-terminus: Antigen TyF1 (177 aa).

This sequence belongs to the Dps family. Homodecamer.

This chain is Antigen TyF1, found in Treponema pallidum subsp. pertenue (Yaws treponeme).